The sequence spans 368 residues: F-box/kelch-repeat protein At2g44700 (368 aa).

The segment at 1 to 23 (MSSSNEPPRKTDQPSSSSASASA) is disordered. The segment covering 14–23 (PSSSSASASA) has biased composition (low complexity). The region spanning 25-71 (PSLFLSLPLEIISMILARVPKRYYPILCSVSKNMRSLVRSPEIHKAR) is the F-box domain. The Kelch repeat unit spans residues 177 to 221 (KVYVIGGYQDDEIAAESFDLNTQTWEAAPIPDEKESHRWICKANV).

The sequence is that of F-box/kelch-repeat protein At2g44700 from Arabidopsis thaliana (Mouse-ear cress).